Reading from the N-terminus, the 297-residue chain is Phosphatidylglycerol--prolipoprotein diacylglyceryl transferase (297 aa).

4 helical membrane passes run 20–40, 50–70, 105–125, and 133–153; these read FLTIRWYGFLISVSVIIGLFV, INPLYISEILPSLIIFSIIGA, AVWEGGIAIHGGLIGGLLSII, and IHLKTFIDILIPSIILGQSIG. R154 is an a 1,2-diacyl-sn-glycero-3-phospho-(1'-sn-glycerol) binding site. The next 3 membrane-spanning stretches (helical) occupy residues 193-213, 225-245, and 266-286; these read PTFLYESLWNFLIFILLIFVF, GFISCLYLISYSFGRFWIEGL, and AQFISIFLFSSGLIGIFFLRL.

Belongs to the Lgt family.

It is found in the cell inner membrane. The catalysed reaction is L-cysteinyl-[prolipoprotein] + a 1,2-diacyl-sn-glycero-3-phospho-(1'-sn-glycerol) = an S-1,2-diacyl-sn-glyceryl-L-cysteinyl-[prolipoprotein] + sn-glycerol 1-phosphate + H(+). The protein operates within protein modification; lipoprotein biosynthesis (diacylglyceryl transfer). Catalyzes the transfer of the diacylglyceryl group from phosphatidylglycerol to the sulfhydryl group of the N-terminal cysteine of a prolipoprotein, the first step in the formation of mature lipoproteins. In Prochlorococcus marinus (strain MIT 9312), this protein is Phosphatidylglycerol--prolipoprotein diacylglyceryl transferase.